Here is a 250-residue protein sequence, read N- to C-terminus: Bacteriorhodopsin-I (250 aa).

The next 7 membrane-spanning stretches (helical) occupy residues 7–27 (EGIW…YFIA), 42–62 (IATI…ALGF), 81–101 (YTDW…LAGA), 114–134 (VLMI…VLSA), 139–159 (LVWW…LFSS), 185–205 (VWLV…LVGI), and 207–227 (IETA…GIIL). At Lys220 the chain carries N6-(retinylidene)lysine.

It belongs to the archaeal/bacterial/fungal opsin family. The covalent binding of retinal to the apoprotein, bacterioopsin, generates bacteriorhodopsin.

The protein resides in the membrane. Light-driven proton pump. This chain is Bacteriorhodopsin-I (bop), found in Haloarcula marismortui (strain ATCC 43049 / DSM 3752 / JCM 8966 / VKM B-1809) (Halobacterium marismortui).